A 424-amino-acid chain; its full sequence is L-glutamine:2-deoxy-scyllo-inosose aminotransferase (424 aa).

N6-(pyridoxal phosphate)lysine is present on Lys-202.

The protein belongs to the DegT/DnrJ/EryC1 family. L-glutamine:2-deoxy-scyllo-inosose/scyllo-inosose aminotransferase subfamily. Pyridoxal 5'-phosphate is required as a cofactor.

It catalyses the reaction 2-deoxy-L-scyllo-inosose + L-glutamine = 2-deoxy-scyllo-inosamine + 2-oxoglutaramate. The enzyme catalyses 3-amino-2,3-dideoxy-scyllo-inosose + L-glutamine = 2-deoxystreptamine + 2-oxoglutaramate. It functions in the pathway metabolic intermediate biosynthesis; 2-deoxystreptamine biosynthesis; 2-deoxystreptamine from D-glucose 6-phosphate: step 2/4. The protein operates within antibiotic biosynthesis; tobramycin biosynthesis. Functionally, catalyzes the PLP-dependent transamination of 2-deoxy-scyllo-inosose (2-DOI) to form 2-deoxy-scyllo-inosamine (2-DOIA) using L-glutamine as the amino donor. Also catalyzes the transamination of 3-amino-2,3-dideoxy-scyllo-inosose (keto-2-DOIA) into 2-deoxystreptamine (2-DOS). This chain is L-glutamine:2-deoxy-scyllo-inosose aminotransferase (tbmB), found in Streptoalloteichus tenebrarius (strain ATCC 17920 / DSM 40477 / JCM 4838 / CBS 697.72 / NBRC 16177 / NCIMB 11028 / NRRL B-12390 / A12253. 1 / ISP 5477) (Streptomyces tenebrarius).